A 312-amino-acid chain; its full sequence is Aspartate carbamoyltransferase catalytic subunit (312 aa).

Carbamoyl phosphate contacts are provided by Arg55 and Thr56. Position 83 (Lys83) interacts with L-aspartate. Carbamoyl phosphate-binding residues include Arg105, His138, and Gln141. L-aspartate is bound by residues Arg171 and Arg225. Residues Gly266 and Pro267 each coordinate carbamoyl phosphate.

It belongs to the aspartate/ornithine carbamoyltransferase superfamily. ATCase family. In terms of assembly, heterododecamer (2C3:3R2) of six catalytic PyrB chains organized as two trimers (C3), and six regulatory PyrI chains organized as three dimers (R2).

It carries out the reaction carbamoyl phosphate + L-aspartate = N-carbamoyl-L-aspartate + phosphate + H(+). It functions in the pathway pyrimidine metabolism; UMP biosynthesis via de novo pathway; (S)-dihydroorotate from bicarbonate: step 2/3. Catalyzes the condensation of carbamoyl phosphate and aspartate to form carbamoyl aspartate and inorganic phosphate, the committed step in the de novo pyrimidine nucleotide biosynthesis pathway. This Corynebacterium efficiens (strain DSM 44549 / YS-314 / AJ 12310 / JCM 11189 / NBRC 100395) protein is Aspartate carbamoyltransferase catalytic subunit.